Here is a 359-residue protein sequence, read N- to C-terminus: Photosystem II protein D1 2 (359 aa).

3 helical membrane-spanning segments follow: residues 29 to 46, 118 to 133, and 142 to 156; these read YVGW…AATT, HFLI…EWEL, and WICV…AASA. H118 provides a ligand contact to chlorophyll a. Residue Y126 participates in pheophytin a binding. Positions 170 and 189 each coordinate [CaMn4O5] cluster. A helical membrane pass occupies residues 197–218; it reads FHMLGVAGVFGGSLFSAMHGSL. H198 provides a ligand contact to chlorophyll a. A quinone contacts are provided by residues H215 and 264–265; that span reads SF. H215 is a Fe cation binding site. H272 is a Fe cation binding site. The chain crosses the membrane as a helical span at residues 274-288; it reads FLAAWPVVGIWFTAL. 4 residues coordinate [CaMn4O5] cluster: H332, E333, D342, and A344. Residues 345–359 constitute a propeptide that is removed on maturation; it reads AAESTPVALQAPAIG.

The protein belongs to the reaction center PufL/M/PsbA/D family. In terms of assembly, PSII is composed of 1 copy each of membrane proteins PsbA, PsbB, PsbC, PsbD, PsbE, PsbF, PsbH, PsbI, PsbJ, PsbK, PsbL, PsbM, PsbT, PsbX, PsbY, PsbZ, Psb30/Ycf12, peripheral proteins PsbO, CyanoQ (PsbQ), PsbU, PsbV and a large number of cofactors. It forms dimeric complexes. Requires The D1/D2 heterodimer binds P680, chlorophylls that are the primary electron donor of PSII, and subsequent electron acceptors. It shares a non-heme iron and each subunit binds pheophytin, quinone, additional chlorophylls, carotenoids and lipids. D1 provides most of the ligands for the Mn4-Ca-O5 cluster of the oxygen-evolving complex (OEC). There is also a Cl(-1) ion associated with D1 and D2, which is required for oxygen evolution. The PSII complex binds additional chlorophylls, carotenoids and specific lipids. as cofactor. Tyr-161 forms a radical intermediate that is referred to as redox-active TyrZ, YZ or Y-Z. Post-translationally, C-terminally processed by CtpA; processing is essential to allow assembly of the oxygen-evolving complex and thus photosynthetic growth.

Its subcellular location is the cellular thylakoid membrane. The enzyme catalyses 2 a plastoquinone + 4 hnu + 2 H2O = 2 a plastoquinol + O2. Its function is as follows. Photosystem II (PSII) is a light-driven water:plastoquinone oxidoreductase that uses light energy to abstract electrons from H(2)O, generating O(2) and a proton gradient subsequently used for ATP formation. It consists of a core antenna complex that captures photons, and an electron transfer chain that converts photonic excitation into a charge separation. The D1/D2 (PsbA/PsbD) reaction center heterodimer binds P680, the primary electron donor of PSII as well as several subsequent electron acceptors. This chain is Photosystem II protein D1 2, found in Synechococcus sp. (strain CC9311).